The sequence spans 1102 residues: Carbamoyl phosphate synthase large chain (1102 aa).

The interval 1-408 (MPKRTDIQSV…AFQKALRSLE (408 aa)) is carboxyphosphate synthetic domain. Positions 129, 175, 181, 182, 214, 216, 221, 247, 248, 249, 291, and 305 each coordinate ATP. Residues 137 to 334 (EEVRKKIGHG…IAKIAAKLAV (198 aa)) form the ATP-grasp 1 domain. 3 residues coordinate Mg(2+): glutamine 291, glutamate 305, and asparagine 307. Mn(2+) is bound by residues glutamine 291, glutamate 305, and asparagine 307. An oligomerization domain region spans residues 409 to 551 (KKGSQFTFVG…YFYSSYDEES (143 aa)). The tract at residues 552 to 954 (EVAPREKPAV…AYAKSQAGAY (403 aa)) is carbamoyl phosphate synthetic domain. The ATP-grasp 2 domain occupies 682 to 873 (GRVLAEAGLP…LAKAAARISL (192 aa)). Residues arginine 718, arginine 757, leucine 759, glutamate 764, glycine 789, isoleucine 790, histidine 791, serine 792, glutamine 832, and glutamate 844 each contribute to the ATP site. Glutamine 832, glutamate 844, and asparagine 846 together coordinate Mg(2+). Positions 832, 844, and 846 each coordinate Mn(2+). One can recognise an MGS-like domain in the interval 955–1100 (GPLPTKGRAF…QEHAAFLIAA (146 aa)). Residues 955 to 1102 (GPLPTKGRAF…HAAFLIAARD (148 aa)) are allosteric domain.

Belongs to the CarB family. In terms of assembly, composed of two chains; the small (or glutamine) chain promotes the hydrolysis of glutamine to ammonia, which is used by the large (or ammonia) chain to synthesize carbamoyl phosphate. Tetramer of heterodimers (alpha,beta)4. It depends on Mg(2+) as a cofactor. The cofactor is Mn(2+).

It catalyses the reaction hydrogencarbonate + L-glutamine + 2 ATP + H2O = carbamoyl phosphate + L-glutamate + 2 ADP + phosphate + 2 H(+). The catalysed reaction is hydrogencarbonate + NH4(+) + 2 ATP = carbamoyl phosphate + 2 ADP + phosphate + 2 H(+). It participates in amino-acid biosynthesis; L-arginine biosynthesis; carbamoyl phosphate from bicarbonate: step 1/1. Its pathway is pyrimidine metabolism; UMP biosynthesis via de novo pathway; (S)-dihydroorotate from bicarbonate: step 1/3. Its function is as follows. Large subunit of the glutamine-dependent carbamoyl phosphate synthetase (CPSase). CPSase catalyzes the formation of carbamoyl phosphate from the ammonia moiety of glutamine, carbonate, and phosphate donated by ATP, constituting the first step of 2 biosynthetic pathways, one leading to arginine and/or urea and the other to pyrimidine nucleotides. The large subunit (synthetase) binds the substrates ammonia (free or transferred from glutamine from the small subunit), hydrogencarbonate and ATP and carries out an ATP-coupled ligase reaction, activating hydrogencarbonate by forming carboxy phosphate which reacts with ammonia to form carbamoyl phosphate. The polypeptide is Carbamoyl phosphate synthase large chain (Streptomyces coelicolor (strain ATCC BAA-471 / A3(2) / M145)).